The chain runs to 174 residues: Zinc finger AN1 domain-containing stress-associated protein 15 (174 aa).

The interval Met1–Ser61 is disordered. Low complexity predominate over residues Pro18–Thr41. The segment covering Glu42–Pro54 has biased composition (pro residues). Residues Val109–Gly155 form an AN1-type zinc finger. 8 residues coordinate Zn(2+): Cys115, Cys118, Cys129, Cys131, Cys136, His139, His145, and Cys147.

Functionally, may be involved in environmental stress response. The polypeptide is Zinc finger AN1 domain-containing stress-associated protein 15 (SAP15) (Oryza sativa subsp. japonica (Rice)).